Here is a 427-residue protein sequence, read N- to C-terminus: Enolase (427 aa).

Residue Gln-163 coordinates (2R)-2-phosphoglycerate. Residue Glu-205 is the Proton donor of the active site. Asp-242, Glu-285, and Asp-312 together coordinate Mg(2+). Residues Lys-337, Arg-366, Ser-367, and Lys-388 each contribute to the (2R)-2-phosphoglycerate site. Lys-337 (proton acceptor) is an active-site residue.

The protein belongs to the enolase family. Requires Mg(2+) as cofactor.

The protein localises to the cytoplasm. The protein resides in the secreted. It localises to the cell surface. The enzyme catalyses (2R)-2-phosphoglycerate = phosphoenolpyruvate + H2O. Its pathway is carbohydrate degradation; glycolysis; pyruvate from D-glyceraldehyde 3-phosphate: step 4/5. Functionally, catalyzes the reversible conversion of 2-phosphoglycerate (2-PG) into phosphoenolpyruvate (PEP). It is essential for the degradation of carbohydrates via glycolysis. In Burkholderia mallei (strain NCTC 10247), this protein is Enolase.